A 133-amino-acid polypeptide reads, in one-letter code: Large ribosomal subunit protein uL14 (133 aa).

This sequence belongs to the universal ribosomal protein uL14 family. As to quaternary structure, part of the 50S ribosomal subunit. Forms a cluster with proteins L3 and L19. In the 70S ribosome, L14 and L19 interact and together make contacts with the 16S rRNA in bridges B5 and B8.

Its function is as follows. Binds to 23S rRNA. Forms part of two intersubunit bridges in the 70S ribosome. In Gloeobacter violaceus (strain ATCC 29082 / PCC 7421), this protein is Large ribosomal subunit protein uL14.